The sequence spans 399 residues: Bombesin receptor subtype-3 (399 aa).

Residues 1 to 41 lie on the Extracellular side of the membrane; that stretch reads MAQRQPHSPNQTLISITNDTESSSSVVSNDNTNKGWSGDNS. N-linked (GlcNAc...) asparagine glycosylation is found at asparagine 10 and asparagine 18. A helical transmembrane segment spans residues 42–63; it reads PGIEALCAIYITYAVIISVGIL. The Cytoplasmic segment spans residues 64–82; that stretch reads GNAILIKVFFKTKSMQTVP. A helical transmembrane segment spans residues 83-103; it reads NIFITSLAFGDLLLLLTCVPV. Topologically, residues 104-121 are extracellular; that stretch reads DATHYLAEGWLFGRIGCK. The cysteines at positions 120 and 203 are disulfide-linked. The helical transmembrane segment at 122–143 threads the bilayer; it reads VLSFIRLTSVGVSVFTLTILSA. At 144–163 the chain is on the cytoplasmic side; it reads DRYKAVVKPLERQPSNAILK. The chain crosses the membrane as a helical span at residues 164–184; the sequence is TCVKAGCVWIVSMIFALPEAI. Over 185-220 the chain is Extracellular; the sequence is FSNVYTFRDPNKNMTFESCTSYPVSKKLLQEIHSLL. Residues 221–241 traverse the membrane as a helical segment; that stretch reads CFLVFYIIPLSIISVYYSLIA. Residues 242–272 lie on the Cytoplasmic side of the membrane; it reads RTLYKSTLNIPTEEQSHARKQIESRKRIART. The chain crosses the membrane as a helical span at residues 273 to 293; the sequence is VLVLVALFALCWLPNHLLYLY. Residues 294–313 are Extracellular-facing; it reads HSFTSQTYVDPSAMHFIFTI. A helical transmembrane segment spans residues 314-333; sequence FSRVLAFSNSCVNPFALYWL. The Cytoplasmic portion of the chain corresponds to 334–399; that stretch reads SKSFQKHFKA…CSVKQAEDRF (66 aa). The S-palmitoyl cysteine moiety is linked to residue cysteine 347.

Belongs to the G-protein coupled receptor 1 family. Interacts with C6orf89. In germ cells in testis. Lung carcinoma cells.

The protein resides in the cell membrane. Functionally, role in sperm cell division, maturation, or function. This receptor mediates its action by association with G proteins that activate a phosphatidylinositol-calcium second messenger system. In Homo sapiens (Human), this protein is Bombesin receptor subtype-3 (BRS3).